The primary structure comprises 413 residues: Multifunctional CCA protein (413 aa).

Gly-8 and Arg-11 together coordinate ATP. Residues Gly-8 and Arg-11 each coordinate CTP. Positions 21 and 23 each coordinate Mg(2+). 3 residues coordinate ATP: Arg-91, Arg-137, and Arg-140. Positions 91, 137, and 140 each coordinate CTP. Positions 228-329 constitute an HD domain; sequence TGVHTLMTLS…VKLFDAIDAW (102 aa).

This sequence belongs to the tRNA nucleotidyltransferase/poly(A) polymerase family. Bacterial CCA-adding enzyme type 1 subfamily. In terms of assembly, monomer. Can also form homodimers and oligomers. Requires Mg(2+) as cofactor. Ni(2+) is required as a cofactor.

It catalyses the reaction a tRNA precursor + 2 CTP + ATP = a tRNA with a 3' CCA end + 3 diphosphate. The catalysed reaction is a tRNA with a 3' CCA end + 2 CTP + ATP = a tRNA with a 3' CCACCA end + 3 diphosphate. Functionally, catalyzes the addition and repair of the essential 3'-terminal CCA sequence in tRNAs without using a nucleic acid template. Adds these three nucleotides in the order of C, C, and A to the tRNA nucleotide-73, using CTP and ATP as substrates and producing inorganic pyrophosphate. tRNA 3'-terminal CCA addition is required both for tRNA processing and repair. Also involved in tRNA surveillance by mediating tandem CCA addition to generate a CCACCA at the 3' terminus of unstable tRNAs. While stable tRNAs receive only 3'-terminal CCA, unstable tRNAs are marked with CCACCA and rapidly degraded. This chain is Multifunctional CCA protein, found in Salmonella typhi.